We begin with the raw amino-acid sequence, 151 residues long: Small ribosomal subunit protein uS11 (151 aa).

Residues 129–151 (IEDVTPVPSDSTRRKGGRRGRRL) are disordered. Positions 142–151 (RKGGRRGRRL) are enriched in basic residues.

This sequence belongs to the universal ribosomal protein uS11 family.

In Procambarus clarkii (Red swamp crayfish), this protein is Small ribosomal subunit protein uS11 (RPS14).